Reading from the N-terminus, the 420-residue chain is Serine hydroxymethyltransferase (420 aa).

Residues Leu-121 and 125-127 (GHL) contribute to the (6S)-5,6,7,8-tetrahydrofolate site. N6-(pyridoxal phosphate)lysine is present on Lys-229. Residue 355–357 (SPF) participates in (6S)-5,6,7,8-tetrahydrofolate binding.

It belongs to the SHMT family. Homodimer. The cofactor is pyridoxal 5'-phosphate.

It is found in the cytoplasm. It catalyses the reaction (6R)-5,10-methylene-5,6,7,8-tetrahydrofolate + glycine + H2O = (6S)-5,6,7,8-tetrahydrofolate + L-serine. It participates in one-carbon metabolism; tetrahydrofolate interconversion. The protein operates within amino-acid biosynthesis; glycine biosynthesis; glycine from L-serine: step 1/1. Functionally, catalyzes the reversible interconversion of serine and glycine with tetrahydrofolate (THF) serving as the one-carbon carrier. This reaction serves as the major source of one-carbon groups required for the biosynthesis of purines, thymidylate, methionine, and other important biomolecules. Also exhibits THF-independent aldolase activity toward beta-hydroxyamino acids, producing glycine and aldehydes, via a retro-aldol mechanism. In Chromohalobacter salexigens (strain ATCC BAA-138 / DSM 3043 / CIP 106854 / NCIMB 13768 / 1H11), this protein is Serine hydroxymethyltransferase.